The chain runs to 136 residues: Small ribosomal subunit protein eS6 (136 aa).

The protein belongs to the eukaryotic ribosomal protein eS6 family.

This chain is Small ribosomal subunit protein eS6, found in Methanosarcina mazei (strain ATCC BAA-159 / DSM 3647 / Goe1 / Go1 / JCM 11833 / OCM 88) (Methanosarcina frisia).